Consider the following 188-residue polypeptide: dCTP deaminase (188 aa).

Residues 111 to 116 (KSTYAR), 135 to 137 (TLE), Gln-156, Tyr-170, and Gln-180 each bind dCTP. Residue Glu-137 is the Proton donor/acceptor of the active site.

Belongs to the dCTP deaminase family. As to quaternary structure, homotrimer.

The catalysed reaction is dCTP + H2O + H(+) = dUTP + NH4(+). It participates in pyrimidine metabolism; dUMP biosynthesis; dUMP from dCTP (dUTP route): step 1/2. Catalyzes the deamination of dCTP to dUTP. This chain is dCTP deaminase, found in Legionella pneumophila (strain Paris).